The sequence spans 227 residues: MKDLFLFSNLLNHSHAFVYAFHFCLVALIILIVAYIARSKMQLVPRGLQNIVEAYLEGVISMGKDTLGSEKLARKYLPLVATIGFIVFFSNVIGIIPGFESPSSSLNLTLVLALVVFIYYNFEGIRENGFFKYFGHFMGPNKFLAPIMFPVEVISHLSRVVSLSFRLFGNIKGDDLFLLAMLTLAPWFAPLPAFALLTLMAVLQTFIFMMLTYVYLAGAVAISEHEH.

The next 5 helical transmembrane spans lie at 16-36 (AFVYAFHFCLVALIILIVAYI), 79-99 (LVATIGFIVFFSNVIGIIPGF), 105-125 (SLNLTLVLALVVFIYYNFEGI), 176-196 (LFLLAMLTLAPWFAPLPAFAL), and 202-222 (VLQTFIFMMLTYVYLAGAVAI).

The protein belongs to the ATPase A chain family. As to quaternary structure, F-type ATPases have 2 components, CF(1) - the catalytic core - and CF(0) - the membrane proton channel. CF(1) has five subunits: alpha(3), beta(3), gamma(1), delta(1), epsilon(1). CF(0) has three main subunits: a(1), b(2) and c(9-12). The alpha and beta chains form an alternating ring which encloses part of the gamma chain. CF(1) is attached to CF(0) by a central stalk formed by the gamma and epsilon chains, while a peripheral stalk is formed by the delta and b chains.

The protein resides in the cell inner membrane. Its function is as follows. Key component of the proton channel; it plays a direct role in the translocation of protons across the membrane. The polypeptide is ATP synthase subunit a (Campylobacter concisus (strain 13826)).